The chain runs to 62 residues: Small ribosomal subunit protein eS27 (62 aa).

Positions 17, 20, 36, and 39 each coordinate Zn(2+). The C4-type zinc-finger motif lies at 17 to 39 (CPDCENEQVVFERASTVVECTVC).

The protein belongs to the eukaryotic ribosomal protein eS27 family. As to quaternary structure, part of the 30S ribosomal subunit. It depends on Zn(2+) as a cofactor.

This chain is Small ribosomal subunit protein eS27, found in Methanoculleus marisnigri (strain ATCC 35101 / DSM 1498 / JR1).